The following is a 298-amino-acid chain: S-adenosyl-L-methionine-dependent methyltransferase dpfgK (298 aa).

Belongs to the methyltransferase superfamily.

Its pathway is secondary metabolite biosynthesis; terpenoid biosynthesis. S-adenosyl-L-methionine-dependent methyltransferase; part of the gene cluster that mediates the biosynthesis of diterpenoid pyrones. The first step of the pathway is the synthesis of the alpha-pyrone moiety by the polyketide synthase dpfgA via condensation of one acetyl-CoA starter unit with 3 malonyl-CoA units and 2 methylations. The alpha-pyrone is then combined with geranylgeranyl pyrophosphate (GGPP) formed by the GGPP synthase dpfgD through the action of the prenyltransferase dpfgC to yield a linear alpha-pyrone diterpenoid. Subsequent steps in the diterpenoid pyrone biosynthetic pathway involve the decalin core formation, which is initiated by the epoxidation of the C10-C11 olefin by the FAD-dependent oxidoreductase dpfgE, and is followed by a cyclization cascade catalyzed by the terpene cyclase dpfgB. The short chain dehydrogenase/reductase dpfgG then oxidizes the 8S hydroxy group to a ketone and the short chain dehydrogenase/reductase dpfgH reduces the ketone to the 8R hydroxy group to yield higginsianin B. Higginsianin B is further methylated by the methyltransferase dpfgI to produce the intermediate named FDDP B. The cytochrome P450 monooxygenase dfgpJ then catalyzes a three-step oxidation at C-27 to generate a carboxylic acid as well as C-26 hydroxylation. Finally, methyltransferase dpfgK methylates the carboxylic acid generated by dpfgJ, yielding the final diterpenoid pyrones from the pathway which were named FDDP D and FDDP E. The chain is S-adenosyl-L-methionine-dependent methyltransferase dpfgK from Gibberella zeae (strain ATCC MYA-4620 / CBS 123657 / FGSC 9075 / NRRL 31084 / PH-1) (Wheat head blight fungus).